Here is a 587-residue protein sequence, read N- to C-terminus: Bifunctional lycopene cyclase/phytoene synthase (587 aa).

The lycopene beta-cyclase stretch occupies residues 1–242 (MGYDYALVHV…IVFGIAAFDK (242 aa)). A run of 7 helical transmembrane segments spans residues 8–28 (VHVK…YPVF), 35–55 (RTLF…SYLI), 77–97 (AEEL…YIIL), 120–140 (GKLV…WLIA), 150–170 (LILV…AHFL), 172–192 (ALPL…LWIV), and 220–240 (IEEA…IAAF). Residues 249–587 (AFPEKFDKPA…WVAWSTLMAA (339 aa)) are phytoene synthase.

The protein in the N-terminal section; belongs to the lycopene beta-cyclase family. This sequence in the C-terminal section; belongs to the phytoene/squalene synthase family.

It is found in the membrane. The catalysed reaction is all-trans-lycopene = gamma-carotene. It catalyses the reaction gamma-carotene = all-trans-beta-carotene. The enzyme catalyses 2 (2E,6E,10E)-geranylgeranyl diphosphate = 15-cis-phytoene + 2 diphosphate. It functions in the pathway carotenoid biosynthesis; beta-carotene biosynthesis. The protein operates within carotenoid biosynthesis; phytoene biosynthesis; all-trans-phytoene from geranylgeranyl diphosphate: step 1/1. In terms of biological role, bifunctional enzyme that catalyzes the reactions from geranylgeranyl diphosphate to phytoene (phytoene synthase) and lycopene to beta-carotene via the intermediate gamma-carotene (lycopene cyclase). The sequence is that of Bifunctional lycopene cyclase/phytoene synthase from Colletotrichum graminicola (strain M1.001 / M2 / FGSC 10212) (Maize anthracnose fungus).